Reading from the N-terminus, the 635-residue chain is Bifunctional lysine-specific demethylase and histidyl-hydroxylase NO66 (635 aa).

Disordered stretches follow at residues 1-115 (MSAV…LQNS) and 141-190 (FNGE…KANG). A compositionally biased stretch (low complexity) spans 84-99 (ASASDINTSASKNVNA). Positions 141–156 (FNGESLKNNSNHSTPV) are enriched in polar residues. The region spanning 295-440 (CSIRMLNPQT…DLLELFFPHA (146 aa)) is the JmjC domain. Fe cation contacts are provided by H341, D343, and H406.

It belongs to the ROX family. NO66 subfamily. Requires Fe(2+) as cofactor.

The protein resides in the nucleus. The enzyme catalyses N(6),N(6)-dimethyl-L-lysyl(36)-[histone H3] + 2 2-oxoglutarate + 2 O2 = L-lysyl(36)-[histone H3] + 2 formaldehyde + 2 succinate + 2 CO2. Oxygenase that can act as both a histone lysine demethylase and a ribosomal histidine hydroxylase. Specifically demethylates 'Lys-4' (H3K4me) and 'Lys-36' (H3K36me) of histone H3, thereby playing a central role in histone code. The sequence is that of Bifunctional lysine-specific demethylase and histidyl-hydroxylase NO66 from Aedes aegypti (Yellowfever mosquito).